The following is an 880-amino-acid chain: GRB2-associated and regulator of MAPK protein 2 (880 aa).

Residues arginine 12–arginine 320 form a CABIT region. Disordered stretches follow at residues proline 385–serine 407, isoleucine 461–valine 483, serine 527–serine 548, serine 569–proline 611, and alanine 633–glutamine 713. Composition is skewed to low complexity over residues proline 640–glycine 663 and glutamine 683–serine 696. At serine 740 the chain carries Phosphoserine. The region spanning serine 813–arginine 877 is the SAM domain.

It belongs to the GAREM family.

Functionally, probable adapter protein that provides a critical link between cell surface epidermal growth factor receptor and the MAPK/ERK signaling pathway. This is GRB2-associated and regulator of MAPK protein 2 (Garem2) from Mus musculus (Mouse).